The chain runs to 508 residues: Photosystem II CP47 reaction center protein (508 aa).

6 consecutive transmembrane segments (helical) span residues 21–36 (SVHIMHTALVAGWAGS), 101–115 (IVFSGLCFLAAIWHW), 140–156 (GIHLFLSGVACFGFGAF), 203–218 (IAAGTLGILAGLFHLS), 237–252 (VLSSSIAAVFFAAFVV), and 457–472 (SFALLFFFGHIWHGSR).

Belongs to the PsbB/PsbC family. PsbB subfamily. As to quaternary structure, PSII is composed of 1 copy each of membrane proteins PsbA, PsbB, PsbC, PsbD, PsbE, PsbF, PsbH, PsbI, PsbJ, PsbK, PsbL, PsbM, PsbT, PsbX, PsbY, PsbZ, Psb30/Ycf12, at least 3 peripheral proteins of the oxygen-evolving complex and a large number of cofactors. It forms dimeric complexes. Binds multiple chlorophylls. PSII binds additional chlorophylls, carotenoids and specific lipids. is required as a cofactor.

The protein localises to the plastid. It is found in the chloroplast thylakoid membrane. One of the components of the core complex of photosystem II (PSII). It binds chlorophyll and helps catalyze the primary light-induced photochemical processes of PSII. PSII is a light-driven water:plastoquinone oxidoreductase, using light energy to abstract electrons from H(2)O, generating O(2) and a proton gradient subsequently used for ATP formation. The polypeptide is Photosystem II CP47 reaction center protein (Draba nemorosa (Woodland whitlowgrass)).